The primary structure comprises 687 residues: Adhesion G-protein coupled receptor G1 (687 aa).

The first 25 residues, 1-25 (MTAQSLLQTTLFLLSLLFLVQGAHG), serve as a signal peptide directing secretion. 26 to 33 (RGHREDFR) provides a ligand contact to heparin. Topologically, residues 26-402 (RGHREDFRFC…VEVDAVHKHY (377 aa)) are extracellular. 2 cysteine pairs are disulfide-bonded: C35/C91 and C121/C177. N-linked (GlcNAc...) asparagine glycans are attached at residues N39, N148, and N171. 190-200 (LKHPQKASRRP) lines the heparin pocket. In terms of domain architecture, GAIN-B spans 224-395 (DTVSFEEDRI…AVLMVSSVEV (172 aa)). 4 N-linked (GlcNAc...) asparagine glycosylation sites follow: N234, N303, N324, and N341. Disulfide bonds link C346–C377 and C366–C379. Positions 346–395 (CVFWVEDPTLSSPGHWSSAGCETVRRETQTSCLCNHLTYFAVLMVSSVEV) are GPS. A stachel region spans residues 384–397 (YFAVLMVSSVEVDA). A helical transmembrane segment spans residues 403–423 (LSLLSYVGCVVSALACVVTIA). At 424-442 (AYLCSRRKPRDYTIKVHMN) the chain is on the cytoplasmic side. A helical membrane pass occupies residues 443–463 (LLLAVFLLDTSFLLSEPVALT). Residues 464–470 (GSEAGCR) are Extracellular-facing. The chain crosses the membrane as a helical span at residues 471 to 491 (ASAIFLHFSLLACLSWMGLEG). Residues 492-512 (YNLYRLVVEVFGTYVPGYLLK) are Cytoplasmic-facing. The helical transmembrane segment at 513–533 (LSAMGWGFPIFLVTLVALVDV) threads the bilayer. The Extracellular segment spans residues 534-570 (DNYGPIILAVHRTPEGVIYPSMCWIRDSLVSYITNLG). Residues 571–591 (LFSLVFLFNMAMLATMVVQIL) traverse the membrane as a helical segment. Residues 592 to 603 (RLRPHTQKWSHV) are Cytoplasmic-facing. A helical membrane pass occupies residues 604-624 (LTLLGLSLVLGLPWALIFFSF). The Extracellular segment spans residues 625-630 (ASGTFQ). The helical transmembrane segment at 631–651 (LVILYLFSIITSFQGFLIFIW) threads the bilayer. The Cytoplasmic portion of the chain corresponds to 652-687 (YWSMRLQARGGPSPLKSNSDSARLPISSGSTSSSRI). Residues 664 to 687 (SPLKSNSDSARLPISSGSTSSSRI) are disordered. A compositionally biased stretch (low complexity) spans 678–687 (SSGSTSSSRI).

It belongs to the G-protein coupled receptor 2 family. LN-TM7 subfamily. As to quaternary structure, heterodimer of 2 chains generated by proteolytic processing; the large extracellular N-terminal fragment (ADGRG1 NT) and the membrane-bound C-terminal fragment (ADGRG1-CT) predominantly remain associated and non-covalently linked. ADGRG1 NT self-associates in a trans-trans manner; the homophilic interaction enhances receptor signaling. Interacts with TGM2. Interacts with heparin; leading to the reduction of ADGRG1 shedding. Interacts with COL3A1. Part of a GPCR-tetraspanin complex at least consisting of ADGRG1, CD81, eventually CD9, and GNA11 in which CD81 is enhancing the association of ADGRG1 with GNA11. Autoproteolytically cleaved into 2 fragments; the large extracellular N-terminal fragment (ADGRG1 NT) and the membrane-bound C-terminal fragment (ADGRG1 CT) predominantly remain associated and non-covalently linked. Shedding to yield the secreted ADGRG1 N-terminal fragment seems to involve metalloprotease(s). In terms of processing, ubiquitinated. Undergoes polyubiquitination upon activation.

Its subcellular location is the cell membrane. It localises to the secreted. The protein resides in the membrane raft. Its activity is regulated as follows. Forms a heterodimer of 2 chains generated by proteolytic processing that remain associated through non-covalent interactions mediated by the GAIN-B domain. In the inactivated receptor, the Stachel sequence (also named stalk) is embedded in the GAIN-B domain, where it adopts a beta-strand conformation. On activation, the Stachel moves into the 7 transmembrane region and adopts a twisted hook-shaped configuration that forms contacts within the receptor, leading to coupling of a G-alpha protein, which activates signaling. The cleaved GAIN-B and N-terminal domains can then dissociate from the rest of the receptor. Functionally, adhesion G-protein coupled receptor (aGPCR) for steroid hormone 17alpha-hydroxypregnenolone (17-OH), which is involved in cell adhesion and cell-cell interactions. Ligand binding causes a conformation change that triggers signaling via guanine nucleotide-binding proteins (G proteins) and modulates the activity of downstream effectors, such as RhoA pathway. ADGRG1 is coupled to G(12) and/or G(13) G proteins (GNA12 and GNA13, respectively) and mediates the activation Rho small GTPases. Acts as a potent suppressor of ferroptosis: binding to 17-OH-binding initiates signaling that down-regulates CD36 and alleviates ferroptosis-induced liver injury. Ligand-binding also induces cell adhesion activity via association with proteins such as collagen III/COL3A1 and TGM2. Mediates cell matrix adhesion in developing neurons and hematopoietic stem cells. Involved in cortical development, specifically in maintenance of the pial basement membrane integrity and in cortical lamination: association with COL3A1 in the developing brain inhibits neuronal migration via activation of the RhoA pathway. Together with TGM2, acts as a regulator of myelination and myelin repair in oligodendrocyte precursor cells. Acts as a hemostatic sensor of shear force: G protein-coupled receptor signaling is activated in response to shear force in platelets, promoting G(13) G protein signaling, and platelet shape change and aggregation in a COL3A1-dependent manner. Acts as an inhibitor of VEGFA production thereby inhibiting angiogenesis through a signaling pathway mediated by PRKCA. Plays a role in the maintenance of hematopoietic stem cells in bone marrow niche. Plays an essential role in testis development. This Pan troglodytes (Chimpanzee) protein is Adhesion G-protein coupled receptor G1 (ADGRG1).